We begin with the raw amino-acid sequence, 190 residues long: Elongation factor P (190 aa).

The protein belongs to the elongation factor P family.

The protein localises to the cytoplasm. The protein operates within protein biosynthesis; polypeptide chain elongation. Functionally, involved in peptide bond synthesis. Stimulates efficient translation and peptide-bond synthesis on native or reconstituted 70S ribosomes in vitro. Probably functions indirectly by altering the affinity of the ribosome for aminoacyl-tRNA, thus increasing their reactivity as acceptors for peptidyl transferase. The polypeptide is Elongation factor P (Sulfurihydrogenibium sp. (strain YO3AOP1)).